The primary structure comprises 352 residues: tRNA pseudouridine synthase D (352 aa).

Asp-81 (nucleophile) is an active-site residue. The TRUD domain maps to 157 to 303 (GVPNYFGGQR…MSHERRILRL (147 aa)).

It belongs to the pseudouridine synthase TruD family.

It catalyses the reaction uridine(13) in tRNA = pseudouridine(13) in tRNA. Its function is as follows. Responsible for synthesis of pseudouridine from uracil-13 in transfer RNAs. The polypeptide is tRNA pseudouridine synthase D (Pseudomonas putida (strain W619)).